A 256-amino-acid polypeptide reads, in one-letter code: Triosephosphate isomerase (256 aa).

Substrate is bound at residue 9–11; sequence NWK. Histidine 97 functions as the Electrophile in the catalytic mechanism. Glutamate 169 serves as the catalytic Proton acceptor. Substrate-binding positions include glycine 175, serine 214, and 235 to 236; that span reads GG.

The protein belongs to the triosephosphate isomerase family. As to quaternary structure, homodimer.

It is found in the cytoplasm. The enzyme catalyses D-glyceraldehyde 3-phosphate = dihydroxyacetone phosphate. Its pathway is carbohydrate biosynthesis; gluconeogenesis. It functions in the pathway carbohydrate degradation; glycolysis; D-glyceraldehyde 3-phosphate from glycerone phosphate: step 1/1. Involved in the gluconeogenesis. Catalyzes stereospecifically the conversion of dihydroxyacetone phosphate (DHAP) to D-glyceraldehyde-3-phosphate (G3P). This Vibrio parahaemolyticus serotype O3:K6 (strain RIMD 2210633) protein is Triosephosphate isomerase.